Consider the following 543-residue polypeptide: Sarafotoxin (543 aa).

Residues 1–23 form the signal peptide; it reads MALLPRLAAGGLLLLLALAALEG. The propeptide occupies 24–69; the sequence is KPAPSALSQLLEKRSEDQAAAGRIIDGGDTKQAARDPSPQRNVEPL. Residues 45–65 form a disordered region; the sequence is GRIIDGGDTKQAARDPSPQRN. 12 consecutive repeat copies span residues 51–90, 91–130, 131–170, 171–210, 211–250, 251–290, 291–330, 331–370, 371–410, 411–450, 451–490, and 491–530. The 12 X 40 AA tandem repeats stretch occupies residues 51–530; the sequence is GDTKQAARDP…LNFCHQDVIW (480 aa). Disulfide bonds link C70-C84 and C72-C80. A propeptide spanning residues 92–109 is cleaved from the precursor; the sequence is DTKQAARDPSPQRNVEPL. Disulfide bonds link C110/C124 and C112/C120. Residues 132–149 constitute a propeptide that is removed on maturation; that stretch reads DTKQAARDPSPQRNVEPL. Cystine bridges form between C150/C164 and C152/C160. A propeptide spanning residues 172–189 is cleaved from the precursor; the sequence is DTKQAARDPSPQRNVEPL. 2 disulfide bridges follow: C190–C204 and C192–C200. Positions 212 to 229 are excised as a propeptide; the sequence is DTKQAARDPSPQRNVEPL. Intrachain disulfides connect C230–C244 and C232–C240. A propeptide spanning residues 252-269 is cleaved from the precursor; that stretch reads DTKQAARDPSPQRNVEPL. Disulfide bonds link C270–C284 and C272–C280. Residues 292 to 309 constitute a propeptide that is removed on maturation; that stretch reads DTKQAARDPSPQRNVEPL. Disulfide bonds link C310-C324 and C312-C320. Positions 332–349 are excised as a propeptide; the sequence is DTKQAARDPSPQRNVEPL. 2 cysteine pairs are disulfide-bonded: C350–C364 and C352–C360. Positions 372 to 389 are excised as a propeptide; that stretch reads DTKQAARDPSPQRNVEPL. Disulfide bonds link C390–C404 and C392–C400. A propeptide spanning residues 412–429 is cleaved from the precursor; sequence DTKQAARDPSPQRNVEPL. Disulfide bonds link C430–C444 and C432–C440. A propeptide spanning residues 452-469 is cleaved from the precursor; the sequence is DTKQAARDPSPQRNVEPL. Intrachain disulfides connect C470/C484 and C472/C480. Positions 492–509 are excised as a propeptide; that stretch reads DTKQAARDPSPQRNVEPL. Disulfide bonds link C510/C524 and C512/C520. Positions 532 to 543 are excised as a propeptide; that stretch reads NADTSANPEFLG.

It belongs to the endothelin/sarafotoxin family. As to expression, expressed by the venom gland.

It is found in the secreted. Its function is as follows. Vasoconstrictor activity. These toxins cause cardiac arrest probably as a result of coronary vasospasm. In terms of biological role, vasoconstrictor activity. Causes cardiac arrest probably as a result of coronary vasospasm. Displays high agonistic activities towards endothelin-2 receptor (EDNRB) (displays affinity in the picomolar range) and endothelin-1 receptor (EDNRA) (lower affinities). The chain is Sarafotoxin from Atractaspis engaddensis (Israeli burrowing asp).